Reading from the N-terminus, the 319-residue chain is Myoblast determination protein 1 (319 aa).

A Peptide (Met-Gly) (interchain with G-Cter in ubiquitin) cross-link involves residue Met-1. Lys-104 is modified (N6-methyllysine; by EHMT2). Positions 109–160 constitute a bHLH domain; it reads DRRKAATMRERRRLSKVNEAFETLKRCTSSNPNQRLPKVEILRNAIRYIEGL. Disordered regions lie at residues 174-222 and 267-319; these read AAAA…GARR and PALL…YQVL. The span at 197-207 shows a compositional bias: polar residues; the sequence is SDASSPRSNCS. Over residues 267-276 the composition is skewed to low complexity; sequence PALLLADAPP.

Efficient DNA binding requires dimerization with another bHLH protein. Seems to form active heterodimers with ITF-2. Interacts with SUV39H1. Interacts with DDX5. Interacts with CHD2. Interacts with TSC22D3. Interacts with SETD3. Interacts with P-TEFB complex; promotes the transcriptional activity of MYOD1 through its CDK9-mediated phosphorylation. Interacts with CSRP3. Interacts with NUPR1. Post-translationally, phosphorylated by CDK9. This phosphorylation promotes its function in muscle differentiation. Acetylated by a complex containing EP300 and PCAF. The acetylation is essential to activate target genes. Conversely, its deacetylation by SIRT1 inhibits its function. In terms of processing, ubiquitinated on the N-terminus; which is required for proteasomal degradation. Post-translationally, methylation at Lys-104 by EHMT2/G9a inhibits myogenic activity.

The protein resides in the nucleus. Functionally, acts as a transcriptional activator that promotes transcription of muscle-specific target genes and plays a role in muscle differentiation. Together with MYF5 and MYOG, co-occupies muscle-specific gene promoter core region during myogenesis. Induces fibroblasts to differentiate into myoblasts. Interacts with and is inhibited by the twist protein. This interaction probably involves the basic domains of both proteins. This chain is Myoblast determination protein 1 (MYOD1), found in Ovis aries (Sheep).